A 456-amino-acid chain; its full sequence is Phospholipase A1 member A (456 aa).

The first 25 residues, 1–25, serve as a signal peptide directing secretion; that stretch reads MRPGLWETCFWLWGPLLWLSIGSSG. Ser-166 (nucleophile) is an active-site residue. Asp-190 (charge relay system) is an active-site residue. Residues Cys-245 and Cys-258 are joined by a disulfide bond. The Charge relay system role is filled by His-260. Intrachain disulfides connect Cys-282-Cys-293 and Cys-296-Cys-304. Residue Asn-365 is glycosylated (N-linked (GlcNAc...) asparagine).

Belongs to the AB hydrolase superfamily. Lipase family.

The protein resides in the secreted. The catalysed reaction is a 1,2-diacyl-sn-glycero-3-phospho-L-serine + H2O = a 2-acyl-sn-glycero-3-phospho-L-serine + a fatty acid + H(+). It catalyses the reaction 1,2-di-(9Z)-octadecenoyl-sn-glycero-3-phospho-L-serine + H2O = 2-(9Z-octadecenoyl)-sn-glycero-3-phospho-L-serine + (9Z)-octadecenoate + H(+). The enzyme catalyses 1-hexadecanoyl-2-(5Z,8Z,11Z,14Z-eicosatetraenoyl)-sn-glycero-3-phospho-L-serine + H2O = 2-(5Z,8Z,11Z,14Z)-eicosatetraenoyl-sn-glycero-3-phospho-L-serine + hexadecanoate + H(+). It carries out the reaction a 1-acyl-sn-glycero-3-phospho-L-serine + H2O = sn-glycero-3-phospho-L-serine + a fatty acid + H(+). The catalysed reaction is 1-(9Z-octadecenoyl)-sn-glycero-3-phospho-L-serine + H2O = sn-glycero-3-phospho-L-serine + (9Z)-octadecenoate + H(+). In terms of biological role, hydrolyzes the ester bond of the acyl group attached at the sn-1 position of phosphatidylserines (phospholipase A1 activity) and 1-acyl-2-lysophosphatidylserines (lysophospholipase activity) in the pathway of phosphatidylserines acyl chain remodeling. Cleaves phosphatidylserines exposed on the outer leaflet of the plasma membrane of apoptotic cells producing 2-acyl-1-lysophosphatidylserines, which in turn enhance mast cell activation and histamine production. Has no activity toward other glycerophospholipids including phosphatidylcholines, phosphatidylethanolamines, phosphatidic acids or phosphatidylinositols, or glycerolipids such as triolein. In Mus musculus (Mouse), this protein is Phospholipase A1 member A.